The chain runs to 94 residues: Cytochrome c-551 (94 aa).

The first 14 residues, 1–14 (MAFTAMTVAPSALA), serve as a signal peptide directing secretion. Residues Cys24, Cys27, His28, and Met73 each contribute to the heme c site.

Post-translationally, binds 1 heme c group covalently per subunit.

Functionally, efficiently couple electron transfer between the cytochrome bc1 complex and the photosynthetic reaction center. The polypeptide is Cytochrome c-551 (Allochromatium vinosum (strain ATCC 17899 / DSM 180 / NBRC 103801 / NCIMB 10441 / D) (Chromatium vinosum)).